The sequence spans 392 residues: Imidazolonepropionase (392 aa).

The Fe(3+) site is built by H69 and H71. Positions 69 and 71 each coordinate Zn(2+). The 4-imidazolone-5-propanoate site is built by R78, Y136, and H163. Y136 contacts N-formimidoyl-L-glutamate. Residue H226 participates in Fe(3+) binding. H226 contacts Zn(2+). Q229 serves as a coordination point for 4-imidazolone-5-propanoate. Residue D302 participates in Fe(3+) binding. A Zn(2+)-binding site is contributed by D302. N-formimidoyl-L-glutamate-binding residues include N304 and G306. S307 serves as a coordination point for 4-imidazolone-5-propanoate.

Belongs to the metallo-dependent hydrolases superfamily. HutI family. Zn(2+) serves as cofactor. It depends on Fe(3+) as a cofactor.

The protein resides in the cytoplasm. The enzyme catalyses 4-imidazolone-5-propanoate + H2O = N-formimidoyl-L-glutamate. The protein operates within amino-acid degradation; L-histidine degradation into L-glutamate; N-formimidoyl-L-glutamate from L-histidine: step 3/3. Functionally, catalyzes the hydrolytic cleavage of the carbon-nitrogen bond in imidazolone-5-propanoate to yield N-formimidoyl-L-glutamate. It is the third step in the universal histidine degradation pathway. This Salinispora arenicola (strain CNS-205) protein is Imidazolonepropionase.